The chain runs to 196 residues: Adenylate kinase (196 aa).

Position 9-17 (9-17 (GIPGVGKST)) interacts with ATP.

It belongs to the archaeal adenylate kinase family.

It is found in the cytoplasm. The catalysed reaction is AMP + ATP = 2 ADP. The protein is Adenylate kinase (adkA) of Pyrococcus horikoshii (strain ATCC 700860 / DSM 12428 / JCM 9974 / NBRC 100139 / OT-3).